The chain runs to 119 residues: MRNITTTTRKMLLLVITILLGIAYHGEAIACPQVNMYLAQCLPYLKAGGNPSPMCCNGLNSLKAAAPEKADRQVACNCLKSVANTIPGINDDFAKQLPAKCGVNIGVPFSKTVDCNSIN.

A signal peptide spans 1–28 (MRNITTTTRKMLLLVITILLGIAYHGEA). 4 cysteine pairs are disulfide-bonded: cysteine 31/cysteine 78, cysteine 41/cysteine 55, cysteine 56/cysteine 101, and cysteine 76/cysteine 115.

Belongs to the plant LTP family.

Its function is as follows. Plant non-specific lipid-transfer proteins transfer phospholipids as well as galactolipids across membranes. May play a role in wax or cutin deposition in the cell walls of expanding epidermal cells and certain secretory tissues. This Arabidopsis thaliana (Mouse-ear cress) protein is Non-specific lipid-transfer protein 11 (LTP11).